The primary structure comprises 284 residues: Pantothenate synthetase (284 aa).

Residue 30 to 37 coordinates ATP; the sequence is MGNLHDGH. His37 serves as the catalytic Proton donor. Gln61 lines the (R)-pantoate pocket. Beta-alanine is bound at residue Gln61. Residue 149-152 coordinates ATP; it reads GEKD. A (R)-pantoate-binding site is contributed by Gln155. ATP is bound by residues Ile178 and 186–189; that span reads LSSR.

The protein belongs to the pantothenate synthetase family. In terms of assembly, homodimer.

It is found in the cytoplasm. It carries out the reaction (R)-pantoate + beta-alanine + ATP = (R)-pantothenate + AMP + diphosphate + H(+). It functions in the pathway cofactor biosynthesis; (R)-pantothenate biosynthesis; (R)-pantothenate from (R)-pantoate and beta-alanine: step 1/1. Catalyzes the condensation of pantoate with beta-alanine in an ATP-dependent reaction via a pantoyl-adenylate intermediate. This chain is Pantothenate synthetase, found in Salmonella newport (strain SL254).